Here is a 752-residue protein sequence, read N- to C-terminus: GTPase-activating protein rrc-1 (752 aa).

The SH3 domain occupies 165–244; that stretch reads PAIAAAVVTK…PRDCVMLIDD (80 aa). In terms of domain architecture, Rho-GAP spans 281-463; sequence LELTELFMRT…FCIENSDSLF (183 aa). Disordered stretches follow at residues 523 to 552 and 582 to 609; these read STGE…ATFQ and RSMR…GANN.

Its function is as follows. Functions as a GTPase-activating protein (GAP) for ced-10/RAC-1 and CDC42. The sequence is that of GTPase-activating protein rrc-1 from Caenorhabditis briggsae.